A 437-amino-acid chain; its full sequence is Beta-1,3-galactosyl-O-glycosyl-glycoprotein beta-1,6-N-acetylglucosaminyltransferase 3 (437 aa).

The Cytoplasmic portion of the chain corresponds to 1–12; that stretch reads MTSWQRLCWHYR. The chain crosses the membrane as a helical; Signal-anchor for type II membrane protein span at residues 13-30; it reads LWTLGCYMLLAILALKLS. At 31–437 the chain is on the lumenal side; the sequence is LRLKCDFDAM…RHKAIYGTEL (407 aa). Intrachain disulfides connect Cys70-Cys227, Cys161-Cys381, Cys182-Cys209, and Cys390-Cys422. The N-linked (GlcNAc...) asparagine glycan is linked to Asn288.

This sequence belongs to the glycosyltransferase 14 family. N-glycosylated.

It is found in the golgi apparatus membrane. The enzyme catalyses a 3-O-[beta-D-galactosyl-(1-&gt;3)-N-acetyl-alpha-D-galactosaminyl]-L-seryl-[protein] + UDP-N-acetyl-alpha-D-glucosamine = 3-O-{beta-D-galactosyl-(1-&gt;3)-[N-acetyl-beta-D-glucosaminyl-(1-&gt;6)]-N-acetyl-alpha-D-galactosaminyl}-L-seryl-[protein] + UDP + H(+). The catalysed reaction is a 3-O-[beta-D-galactosyl-(1-&gt;3)-N-acetyl-alpha-D-galactosaminyl]-L-threonyl-[protein] + UDP-N-acetyl-alpha-D-glucosamine = a 3-O-{beta-D-galactosyl-(1-&gt;3)-[N-acetyl-beta-D-glucosaminyl-(1-&gt;6)]-N-acetyl-alpha-D-galactosaminyl}-L-threonyl-[protein] + UDP + H(+). It catalyses the reaction a beta-D-Gal-(1-&gt;4)-beta-D-GlcNAc-(1-&gt;3)-beta-D-Gal-(1-&gt;4)-beta-D-GlcNAc derivative + UDP-N-acetyl-alpha-D-glucosamine = a beta-D-Gal-(1-&gt;4)-beta-D-GlcNAc-(1-&gt;3)-[beta-D-GlcNAc-(1-&gt;6)]-beta-D-Gal-(1-&gt;4)-N-acetyl-beta-D-glucosaminyl derivative + UDP + H(+). It carries out the reaction 3-O-[N-acetyl-beta-D-glucosaminyl-(1-&gt;3)-N-acetyl-alpha-D-galactosaminyl]-L-seryl-[protein] + UDP-N-acetyl-alpha-D-glucosamine = 3-O-[N-acetyl-beta-D-glucosaminyl-(1-&gt;3)-[N-acetyl-beta-D-glucosaminyl-(1-&gt;6)]-N-acetyl-alpha-D-galactosaminyl]-L-seryl-[protein] + UDP + H(+). The enzyme catalyses a 3-O-[N-acetyl-beta-D-glucosaminyl-(1-&gt;3)-N-acetyl-alpha-D-galactosaminyl]-L-threonyl-[protein] + UDP-N-acetyl-alpha-D-glucosamine = 3-O-[N-acetyl-beta-D-glucosaminyl-(1-&gt;3)-[N-acetyl-beta-D-glucosaminyl-(1-&gt;6)]-N-acetyl-alpha-D-galactosaminyl]-L-threonyl-[protein] + UDP + H(+). Its pathway is protein modification; protein glycosylation. Glycosyltransferase that can synthesize all known mucin beta 6 N-acetylglucosaminides. Mediates core 2 and core 4 O-glycan branching, 2 important steps in mucin-type biosynthesis. Also has I-branching enzyme activity by converting linear into branched poly-N-acetyllactosaminoglycans, leading to introduce the blood group I antigen during embryonic development. The protein is Beta-1,3-galactosyl-O-glycosyl-glycoprotein beta-1,6-N-acetylglucosaminyltransferase 3 (Gcnt3) of Mus musculus (Mouse).